The chain runs to 227 residues: PKHD-type hydroxylase ACICU_00484 (227 aa).

One can recognise a Fe2OG dioxygenase domain in the interval 78–178 (DIIPPLFNRY…RIASFFWVQS (101 aa)). H96, D98, and H159 together coordinate Fe cation. Residue R169 coordinates 2-oxoglutarate.

The cofactor is Fe(2+). L-ascorbate serves as cofactor.

The polypeptide is PKHD-type hydroxylase ACICU_00484 (Acinetobacter baumannii (strain ACICU)).